Consider the following 322-residue polypeptide: Undecaprenyl-phosphate 4-deoxy-4-formamido-L-arabinose transferase (322 aa).

Residues M1 to M235 are Cytoplasmic-facing. The helical transmembrane segment at L236–I256 threads the bilayer. Topologically, residues L257–G269 are periplasmic. A helical transmembrane segment spans residues V270–L290. Residues L291 to E322 lie on the Cytoplasmic side of the membrane.

It belongs to the glycosyltransferase 2 family.

It is found in the cell inner membrane. The enzyme catalyses UDP-4-deoxy-4-formamido-beta-L-arabinose + di-trans,octa-cis-undecaprenyl phosphate = 4-deoxy-4-formamido-alpha-L-arabinopyranosyl di-trans,octa-cis-undecaprenyl phosphate + UDP. It functions in the pathway glycolipid biosynthesis; 4-amino-4-deoxy-alpha-L-arabinose undecaprenyl phosphate biosynthesis; 4-amino-4-deoxy-alpha-L-arabinose undecaprenyl phosphate from UDP-4-deoxy-4-formamido-beta-L-arabinose and undecaprenyl phosphate: step 1/2. The protein operates within bacterial outer membrane biogenesis; lipopolysaccharide biosynthesis. Its function is as follows. Catalyzes the transfer of 4-deoxy-4-formamido-L-arabinose from UDP to undecaprenyl phosphate. The modified arabinose is attached to lipid A and is required for resistance to polymyxin and cationic antimicrobial peptides. In Escherichia coli O7:K1 (strain IAI39 / ExPEC), this protein is Undecaprenyl-phosphate 4-deoxy-4-formamido-L-arabinose transferase.